Reading from the N-terminus, the 258-residue chain is UPF0246 protein Shew_1093 (258 aa).

This sequence belongs to the UPF0246 family.

This chain is UPF0246 protein Shew_1093, found in Shewanella loihica (strain ATCC BAA-1088 / PV-4).